The primary structure comprises 365 residues: NAD(P)H-quinone oxidoreductase subunit 1, chloroplastic (365 aa).

Transmembrane regions (helical) follow at residues 32 to 52 (LFPI…IVWL), 98 to 118 (YLFS…YLII), 129 to 149 (LSIG…GLLM), 257 to 279 (LFYV…LYLG), 302 to 322 (VFGT…FLFI), and 338 to 358 (LLNL…LLTT).

This sequence belongs to the complex I subunit 1 family. NDH is composed of at least 16 different subunits, 5 of which are encoded in the nucleus.

The protein resides in the plastid. It localises to the chloroplast thylakoid membrane. It carries out the reaction a plastoquinone + NADH + (n+1) H(+)(in) = a plastoquinol + NAD(+) + n H(+)(out). The catalysed reaction is a plastoquinone + NADPH + (n+1) H(+)(in) = a plastoquinol + NADP(+) + n H(+)(out). NDH shuttles electrons from NAD(P)H:plastoquinone, via FMN and iron-sulfur (Fe-S) centers, to quinones in the photosynthetic chain and possibly in a chloroplast respiratory chain. The immediate electron acceptor for the enzyme in this species is believed to be plastoquinone. Couples the redox reaction to proton translocation, and thus conserves the redox energy in a proton gradient. This Spinacia oleracea (Spinach) protein is NAD(P)H-quinone oxidoreductase subunit 1, chloroplastic.